The sequence spans 124 residues: UPF0375 protein Y45F10C.4 (124 aa).

The signal sequence occupies residues 1–23 (MNFLPSTVLLLSFVVAIISGSFS). Asparagine 36 and asparagine 62 each carry an N-linked (GlcNAc...) asparagine glycan.

This sequence belongs to the UPF0375 family.

The protein resides in the secreted. This is UPF0375 protein Y45F10C.4 from Caenorhabditis elegans.